Consider the following 64-residue polypeptide: Drosocin antimicrobial peptides (64 aa).

An N-terminal signal peptide occupies residues 1-19; the sequence is MKFTIVFLLLACVFAMAVA. Positions 20–21 are excised as a propeptide; it reads TP. The O-linked (GalNAc...) serine glycan is linked to serine 28. Residue threonine 32 is glycosylated (O-linked (GalNAc...) threonine). The segment at 32 to 40 is critical for inhibition of translation, possibly due to its role in mediating interactions with bacterial 23S rRNA and peptide chain release factors; that stretch reads TSHPRPIRV.

It belongs to the drosocin family. Associates with the bacterial 50S ribosomal complex, occupying the nascent peptide exit tunnel. Interacts with bacterial 23S rRNA; this interaction is direct. Interacts with bacterial rplV/50S ribosomal protein L22; this interaction is direct. Interacts with bacterial prfA/peptide chain release factor RF1; while associated with the bacterial 50S ribosomal complex, this interaction is direct and traps RF1 on the ribosome, inhibiting further translation. Post-translationally, proteolytically cleaved at a pair of basic residues corresponding to the RXK/RR optimal cleavage site for furin proteases to produce two distinct antibacterial peptides. In terms of processing, O-glycosylated. O-glycosylation may be required for efficient uptake by target bacterial cells. Monosaccharide modification of Thr-32 provides better antibacterial activity than disaccharide modification or no modification. O-glycosylation of Thr-32 is not essential for antimicrobial activity but enhances this activity by mediating interactions with the 23S rRNA and increasing the efficiency of translation inhibition.

Its subcellular location is the secreted. In terms of biological role, antibacterial peptide with strong anti-Gram-negative bacteria activity. Significantly contributes to antibacterial activity against Enterobacter cloacae but not Providencia burhodogranariea. Inhibitor of bacterial translation machinery that targets translation termination in a prfA- or prfB-dependent manner. Binds within the nascent peptide exit tunnel of the bacterial large ribosomal subunit, potentially interfering with nascent chain translocation that occurs post-peptide bond formation. Binds prfA/RF1 (and potentially prfB/RF2), trapping it on the ribosome after release of the nascent polypeptide chain and preventing further translation. The resulting depletion of peptide chain release factors further disrupts bacterial translation by preventing ribosomal peptide chain release and inducing stop codon readthrough. Entry into target Escherichia coli cells requires the bacterial peptide antibiotic transporter sbmA. Functionally, peptide with significant antibacterial activity against Providencia burhodogranariea but not Enterobacter cloacae. The protein is Drosocin antimicrobial peptides (Dro) of Drosophila simulans (Fruit fly).